We begin with the raw amino-acid sequence, 331 residues long: MTIITINIPSLTPHPCVEYWSVCKVEALFETPFLELVYQAAQVHRKHFNPQTIQLSTLMSIKTGGCPEDCSYCPQSARYHTGVQNQQLLCVEEIVEKAKIAKSRGAGRFCMGAAWRGPKPKDIEKITEIIKAVKDLGLETCGTFGLLQDGMAEELKEAGLDYYNHNIDTAPEHYKEIIGTRDFDDRLNTLGKVRKAGLKVCCGGIVGMNETRKERAGLIASLANLDPQPESVPINQLVKVEGTPLADAQELDWTEFVRTIAVARITMPKSYVRLSAGRQGMSEEMQAMCFMAGANSIFYGDKLLVTVNPEEDGDQLLMAKLDLKPETQENK.

Residues 51–278 (QTIQLSTLMS…KSYVRLSAGR (228 aa)) form the Radical SAM core domain. 3 residues coordinate [4Fe-4S] cluster: Cys66, Cys70, and Cys73. [2Fe-2S] cluster-binding residues include Cys110, Cys141, Cys201, and Arg273.

It belongs to the radical SAM superfamily. Biotin synthase family. Homodimer. The cofactor is [4Fe-4S] cluster. [2Fe-2S] cluster serves as cofactor.

It carries out the reaction (4R,5S)-dethiobiotin + (sulfur carrier)-SH + 2 reduced [2Fe-2S]-[ferredoxin] + 2 S-adenosyl-L-methionine = (sulfur carrier)-H + biotin + 2 5'-deoxyadenosine + 2 L-methionine + 2 oxidized [2Fe-2S]-[ferredoxin]. Its pathway is cofactor biosynthesis; biotin biosynthesis; biotin from 7,8-diaminononanoate: step 2/2. In terms of biological role, catalyzes the conversion of dethiobiotin (DTB) to biotin by the insertion of a sulfur atom into dethiobiotin via a radical-based mechanism. The protein is Biotin synthase of Histophilus somni (strain 129Pt) (Haemophilus somnus).